The primary structure comprises 560 residues: MSNKVKSDIEIASKAEILPVTTIAKHLGLDADALELYGKYKAKLSYDTIHSLKDQEPGKLVLVTAINPTPAGEGKSTVTVGLGDALSKKDKKTVIALREPSLGPTMGIKGGATGGGYAQVIPMEDINLHFTGDFHAITAANNALSAFIDNHMQQGNELGIDGRRIVWKRVVDLNDRALRKVVVGLGGPVQGVPREDGFDITVASEIMAIICLASDLKDLKKRLSEIVIGYNYKKEPITVGEMGYEGALTLLLKDALKPNLVQTLEHTPAIVHGGPFANIAHGCNSVSATSTALRLGDYVVTEAGFGADLGAEKFLDIKVPALGKAPDCVVIVATIRALKMHGGALKTELSEENVEALAKGFTNLQKHTESIQTFGIPYVVAINKFITDSDAEVAKLEALCEEHGIPFSLTEVWEKGGDGGLELADKVIAAVESGEADYNRIYDDAWSMEEKLEAIVTKVYGGIGVELSSKAQKQIVEFKKYGWDRYPICMAKTQYSLSDDPTLLGRPTDFVIHIREFIPKLGAGFVVALTGDVMTMPGLPKKPAALNMDVDENGNAQGLF.

Position 69–76 (69–76) interacts with ATP; sequence TPAGEGKS.

This sequence belongs to the formate--tetrahydrofolate ligase family.

It catalyses the reaction (6S)-5,6,7,8-tetrahydrofolate + formate + ATP = (6R)-10-formyltetrahydrofolate + ADP + phosphate. Its pathway is one-carbon metabolism; tetrahydrofolate interconversion. This chain is Formate--tetrahydrofolate ligase, found in Listeria welshimeri serovar 6b (strain ATCC 35897 / DSM 20650 / CCUG 15529 / CIP 8149 / NCTC 11857 / SLCC 5334 / V8).